We begin with the raw amino-acid sequence, 831 residues long: Phenylalanine--tRNA ligase beta subunit (831 aa).

Residues 42–157 (ADISGPIVVG…GFAEPGTKAD (116 aa)) form the tRNA-binding domain. Residues 408-483 (VPREPIVVRA…RNEGYENIPA (76 aa)) enclose the B5 domain. The Mg(2+) site is built by D461, D467, E470, and E471. The region spanning 737-830 (STYPVATQDV…AAERTGAVLR (94 aa)) is the FDX-ACB domain.

It belongs to the phenylalanyl-tRNA synthetase beta subunit family. Type 1 subfamily. As to quaternary structure, tetramer of two alpha and two beta subunits. Mg(2+) is required as a cofactor.

It is found in the cytoplasm. The enzyme catalyses tRNA(Phe) + L-phenylalanine + ATP = L-phenylalanyl-tRNA(Phe) + AMP + diphosphate + H(+). The chain is Phenylalanine--tRNA ligase beta subunit from Thermobifida fusca (strain YX).